A 231-amino-acid polypeptide reads, in one-letter code: uncharacterized protein (231 aa).

Residue 10-34 (VVTGAGSGIGEAIATLLHEEGAKVV) coordinates NADP(+). Serine 140 lines the substrate pocket. Catalysis depends on tyrosine 153, which acts as the Proton acceptor.

The protein belongs to the short-chain dehydrogenases/reductases (SDR) family.

This is an uncharacterized protein from Staphylococcus aureus (strain N315).